A 392-amino-acid polypeptide reads, in one-letter code: Formate-dependent phosphoribosylglycinamide formyltransferase (392 aa).

N(1)-(5-phospho-beta-D-ribosyl)glycinamide-binding positions include 22 to 23 (EL) and E82. Residues R114, K155, 160–165 (SSGKGQ), 195–198 (EGLV), and E203 contribute to the ATP site. The ATP-grasp domain occupies 119-308 (RLAAETLGVP…EFALHVRAFL (190 aa)). Mg(2+)-binding residues include E267 and E279. N(1)-(5-phospho-beta-D-ribosyl)glycinamide contacts are provided by residues D286, K355, and 362-363 (RR).

This sequence belongs to the PurK/PurT family. Homodimer.

It carries out the reaction N(1)-(5-phospho-beta-D-ribosyl)glycinamide + formate + ATP = N(2)-formyl-N(1)-(5-phospho-beta-D-ribosyl)glycinamide + ADP + phosphate + H(+). Its pathway is purine metabolism; IMP biosynthesis via de novo pathway; N(2)-formyl-N(1)-(5-phospho-D-ribosyl)glycinamide from N(1)-(5-phospho-D-ribosyl)glycinamide (formate route): step 1/1. Its function is as follows. Involved in the de novo purine biosynthesis. Catalyzes the transfer of formate to 5-phospho-ribosyl-glycinamide (GAR), producing 5-phospho-ribosyl-N-formylglycinamide (FGAR). Formate is provided by PurU via hydrolysis of 10-formyl-tetrahydrofolate. This chain is Formate-dependent phosphoribosylglycinamide formyltransferase, found in Pectobacterium carotovorum subsp. carotovorum (strain PC1).